The following is a 479-amino-acid chain: Poly(A) polymerase catalytic subunit (479 aa).

Residues Asp202 and Asp204 contribute to the active site. Asp202, Asp204, and Asp253 together coordinate Ca(2+).

It belongs to the poxviridae poly(A) polymerase catalytic subunit family. In terms of assembly, heterodimer of a large (catalytic) subunit and a small (regulatory) subunit.

It carries out the reaction RNA(n) + ATP = RNA(n)-3'-adenine ribonucleotide + diphosphate. Its function is as follows. Polymerase that creates the 3'-poly(A) tail of mRNA's. This chain is Poly(A) polymerase catalytic subunit (OPG063), found in Bos taurus (Bovine).